A 354-amino-acid polypeptide reads, in one-letter code: S-adenosylmethionine:tRNA ribosyltransferase-isomerase (354 aa).

This sequence belongs to the QueA family. In terms of assembly, monomer.

The protein localises to the cytoplasm. The catalysed reaction is 7-aminomethyl-7-carbaguanosine(34) in tRNA + S-adenosyl-L-methionine = epoxyqueuosine(34) in tRNA + adenine + L-methionine + 2 H(+). It functions in the pathway tRNA modification; tRNA-queuosine biosynthesis. Transfers and isomerizes the ribose moiety from AdoMet to the 7-aminomethyl group of 7-deazaguanine (preQ1-tRNA) to give epoxyqueuosine (oQ-tRNA). This Methylobacterium radiotolerans (strain ATCC 27329 / DSM 1819 / JCM 2831 / NBRC 15690 / NCIMB 10815 / 0-1) protein is S-adenosylmethionine:tRNA ribosyltransferase-isomerase.